The chain runs to 252 residues: Neurovirulence factor ICP34.5 (252 aa).

Over residues 1–15 (MARRRRRHRGPRRPR) the composition is skewed to basic residues. The required for nucleolar localization stretch occupies residues 1-17 (MARRRRRHRGPRRPRPP). Disordered regions lie at residues 1–129 (MARR…PFRL) and 150–179 (RRAG…PATP). The segment covering 25–36 (TAQSQVTSTPNS) has biased composition (polar residues). Over residues 46 to 59 (AAPPPPPAGGPPPS) the composition is skewed to pro residues. Acidic residues predominate over residues 74-84 (ASDDDDDDDWP). 2 stretches are compositionally biased toward pro residues: residues 85–94 (DSPPPEPAPE) and 120–129 (SHPPSRPFRL). Residues 129–138 (LPPRLALRLR) carry the Nuclear export signal motif. 6 consecutive repeat copies span residues 162–164 (ATP), 165–167 (ATP), 168–170 (ATP), 171–173 (ATP), 174–176 (ATP), and 177–179 (ATP). Residues 162–179 (ATPATPATPATPATPATP) are 6 X 3 AA tandem repeats of A-T-P. The span at 165-179 (ATPATPATPATPATP) shows a compositional bias: low complexity. A binding to PP1CA region spans residues 179-192 (PARVRFSPHVRVRH). An interaction with host PPP1CA region spans residues 179–192 (PARVRFSPHVRVRH). Residues 194–252 (VVWASAARLARRGSWARERADRARFRRRVAEAEAVIGPCLGPKARARALARGAGPANSV) are important for interferon resistance. The short motif at 204–222 (RRGSWARERADRARFRRRV) is the Bipartite nuclear localization signal element. The segment at 222 to 237 (VAEAEAVIGPCLGPKA) is interaction with host EIF2S1/EIF-2ALPHA.

This sequence belongs to the PPP1R15 family. As to quaternary structure, interacts with host PPP1CA to form a high-molecular-weight complex that dephosphorylates EIF2S1/eIF-2alpha. Interacts with host EIF2S1/eIF-2alpha; this interaction is crucial for the specific dephosphorylation of EIF2S1/eIF-2alpha by PPP1CA. Binds to proliferating cell nuclear antigen (PCNA), which may release host cells from growth arrest and facilitate viral replication. Interacts (via N-terminus) with host C1QBP and PRKCA. Interacts with protein UL31. Interacts with host TBK1. Interacts with host STING/TMEM173; this interaction inhibits the intracellular DNA sensing pathway. Interacts with host BECN1; this interaction modulates host autophagy.

The protein localises to the host cytoplasm. Its subcellular location is the host nucleus. The protein resides in the host nucleolus. It localises to the virion. Functionally, inhibits the establishment of the immune response and of the integrated stress response (ISR) in the infected cell. Plays essential roles in viral nuclear egress to mediate capsid transit across the nuclear membrane. Facilitates nuclear egress cooperatively with host C1QBP and protein kinase C/PKC to induce lamin A/C phosphorylation and subsequent reorganization. In turn, lamina disassembles and nuclear egress occurs. Recruits the serine/threonine protein phosphatase PPP1CA/PP1-alpha to dephosphorylate the translation initiation factor EIF2S1/eIF-2alpha, thereby couteracting the host shutoff of protein synthesis involving double-stranded RNA-dependent protein kinase EIF2AK2/PKR. In turn, controls host IRF3 activation and subsequently inhibits host interferon response. Controls the DNA sensing pathway by interacting with and inhibiting host STING/TMEM173. Also down-modulates the host MHC class II proteins cell surface expression. Acts as a neurovirulence factor that has a profound effect on the growth of the virus in central nervous system tissue, by interacting with host BECN1 and thereby antagonizing the host autophagy response. This Human herpesvirus 1 (strain CVG-2) (HHV-1) protein is Neurovirulence factor ICP34.5 (RL1).